Here is a 408-residue protein sequence, read N- to C-terminus: Adenylosuccinate synthetase (408 aa).

GTP-binding positions include Gly12–Lys18 and Gly40–Thr42. Asp13 serves as the catalytic Proton acceptor. Mg(2+) is bound by residues Asp13 and Gly40. IMP is bound by residues Asp13–Lys16, Asn38–His41, Thr121, Arg135, Gln213, Thr228, and Arg292. His41 (proton donor) is an active-site residue. Thr288 to Arg294 contributes to the substrate binding site. Residues Arg294, Lys320–Asp322, and Ser393–Ser395 contribute to the GTP site.

It belongs to the adenylosuccinate synthetase family. As to quaternary structure, homodimer. It depends on Mg(2+) as a cofactor.

Its subcellular location is the cytoplasm. It carries out the reaction IMP + L-aspartate + GTP = N(6)-(1,2-dicarboxyethyl)-AMP + GDP + phosphate + 2 H(+). It functions in the pathway purine metabolism; AMP biosynthesis via de novo pathway; AMP from IMP: step 1/2. Plays an important role in the de novo pathway of purine nucleotide biosynthesis. Catalyzes the first committed step in the biosynthesis of AMP from IMP. In Thermus thermophilus (strain ATCC BAA-163 / DSM 7039 / HB27), this protein is Adenylosuccinate synthetase.